A 164-amino-acid chain; its full sequence is Phosphopantetheine adenylyltransferase (164 aa).

Serine 9 serves as a coordination point for substrate. Residues 9 to 10 and histidine 17 contribute to the ATP site; that span reads SF. Positions 41, 78, and 92 each coordinate substrate. Residues 93 to 95, glutamate 103, and 128 to 134 contribute to the ATP site; these read GLR and VRTITAT.

It belongs to the bacterial CoaD family. Homohexamer. Mg(2+) is required as a cofactor.

The protein localises to the cytoplasm. The enzyme catalyses (R)-4'-phosphopantetheine + ATP + H(+) = 3'-dephospho-CoA + diphosphate. The protein operates within cofactor biosynthesis; coenzyme A biosynthesis; CoA from (R)-pantothenate: step 4/5. Reversibly transfers an adenylyl group from ATP to 4'-phosphopantetheine, yielding dephospho-CoA (dPCoA) and pyrophosphate. This Brucella suis (strain ATCC 23445 / NCTC 10510) protein is Phosphopantetheine adenylyltransferase.